A 172-amino-acid chain; its full sequence is Disulfide bond formation protein B (172 aa).

Residues 1 to 16 (MNLFASLNQFSKNRIS) are Cytoplasmic-facing. Residues 17–33 (WLLLLLFVVFFEGAALF) form a helical membrane-spanning segment. Residues 34–51 (FQHVMMLSPCVMCIYERV) are Periplasmic-facing. A disulfide bridge connects residues Cys43 and Cys46. The chain crosses the membrane as a helical span at residues 52–67 (AMLGVGGAALFGLIAP). Topologically, residues 68–74 (NNPLVRW) are cytoplasmic. A helical membrane pass occupies residues 75-92 (LGLAAWGASAYKGLALSL). Topologically, residues 93 to 147 (QHVDYQFNPSPFATCDLFVTFPDWAPLNQWAPWMFEAYGDCSKIVWQFMTLSMPQ) are periplasmic. A disulfide bond links Cys107 and Cys133. A helical membrane pass occupies residues 148–166 (WLVIIFAGNLVALAFIVIA). Over 167–172 (QFFKSK) the chain is Cytoplasmic.

Belongs to the DsbB family.

The protein resides in the cell inner membrane. Functionally, required for disulfide bond formation in some periplasmic proteins. Acts by oxidizing the DsbA protein. The chain is Disulfide bond formation protein B from Vibrio vulnificus (strain CMCP6).